The primary structure comprises 173 residues: Cell division protein SepF (173 aa).

The disordered stretch occupies residues 31–82 (FEDFDEPLDERPSRNRSPRDDSRNNAVTDSSDHSPSRNERRSPAPAPATADL). Basic and acidic residues-rich tracts occupy residues 39–53 (DERP…DDSR) and 60–72 (SSDH…ERRS).

It belongs to the SepF family. In terms of assembly, homodimer. Interacts with FtsZ.

The protein localises to the cytoplasm. In terms of biological role, cell division protein that is part of the divisome complex and is recruited early to the Z-ring. Probably stimulates Z-ring formation, perhaps through the cross-linking of FtsZ protofilaments. Its function overlaps with FtsA. The polypeptide is Cell division protein SepF (Thermobifida fusca (strain YX)).